A 376-amino-acid polypeptide reads, in one-letter code: MAADYYQLLGVARDADKDEIKRAYRRLARKYHPDVNKEPGAEDKFKEINRAYEVLSEPETRARYDQFGEAGVSGAGAAGFQDFGDMGGFADIFETFFSGFGGMGGQQASARRRGPTRGEDLRLDLKLDFRDAIFGGEKEIRVTHEETCGTCQGSGAKAGTRPQTCTTCGGAGQVRRATRTPFGSFTQVSVCPTCEGSGQMIVDKCDDCGGAGRLRRPKKLKINIPAGVDSGTRLRVANEGDAGLRGGPPGDLYVYLFVSEDTQFRREGINLFSTVTISYLQAILGCSLEVATVDGPTELIIPPGTQPNAVLTVEGKGVPRLGNPVARGNLLVTIKVEIPTKISAEERELLEKVVQIRGDRAGKGGIEGFFKGVFGG.

A J domain is found at 4 to 68; sequence DYYQLLGVAR…ETRARYDQFG (65 aa). The CR-type zinc-finger motif lies at 135–217; sequence GGEKEIRVTH…CGGAGRLRRP (83 aa). Zn(2+) contacts are provided by Cys-148, Cys-151, Cys-165, Cys-168, Cys-191, Cys-194, Cys-205, and Cys-208. CXXCXGXG motif repeat units follow at residues 148-155, 165-172, 191-198, and 205-212; these read CGTCQGSG, CTTCGGAG, CPTCEGSG, and CDDCGGAG.

The protein belongs to the DnaJ family. As to quaternary structure, homodimer. It depends on Zn(2+) as a cofactor.

It localises to the cytoplasm. Its function is as follows. Participates actively in the response to hyperosmotic and heat shock by preventing the aggregation of stress-denatured proteins and by disaggregating proteins, also in an autonomous, DnaK-independent fashion. Unfolded proteins bind initially to DnaJ; upon interaction with the DnaJ-bound protein, DnaK hydrolyzes its bound ATP, resulting in the formation of a stable complex. GrpE releases ADP from DnaK; ATP binding to DnaK triggers the release of the substrate protein, thus completing the reaction cycle. Several rounds of ATP-dependent interactions between DnaJ, DnaK and GrpE are required for fully efficient folding. Also involved, together with DnaK and GrpE, in the DNA replication of plasmids through activation of initiation proteins. The protein is Chaperone protein DnaJ of Synechococcus sp. (strain ATCC 27144 / PCC 6301 / SAUG 1402/1) (Anacystis nidulans).